The chain runs to 1149 residues: MAIRYIFGRAGRGKSYLALEEIKQKLQEEEDNKLFLLVPEQFTLQAERDLIRKQELTGMMRAEVLSFTRLAHRVFSEVGGLTRVPINELGKNMILRKIADESLKELSIYQSIAKQDGFITKLNELICEMKQHDITPTELTMELNEIEEETILKRKLEDITLLYQRFNNYLKGQYVDNEDHVNLLIENIERVEFLEGAEIWIDGFQSFTPQIIRVIEKLAQKVANITITFTMELNAKEKDKDLFHITQKTYLKVKTIAQKFNLDEEVINLDIEERKVLPKEKEIAHIEREFNTYPYKQYADEIANLEIFAGSNLYSEMENVAAQIIHLVRNRGYRWNDIALVSGGLDQYSMILKRVFEEYHIPYFIDEKRSIMNNPMIELILSSIEILSRGYQYEDVFSFLKTGFSDLTKDEVEQLENYVLQYGIRGKAYSEPFTKGFEKKQIQQKDKEEGEKQIDEEKKEKYNELRMRFIAPFAKFEKRIYRKKKIGEITKALFEFMKELNIEDKLNQWIEELREEKYFEYVNENTQIWNKIMEIFDQLTEILADESATLKEYGRILEAGFLACKVGVIPSTIDQVLVGSIERSKSHDIKALFVVGVNDGVLPFGQEDGGILLDHERESLVKKGISIGTTLESSLLEEQFMIYSAFSKPTEYLWVSYALADQEGKAMRQSILIDRFKKLFKNLRIKSDVVNDVDRQLHLITTPISTFKYMTENIRQNVDDKAMADMWWDVYDWYSKEPTWEDRRKLMVKGLFHQNQITYIGENKAKSLYDNPIKSSVSRLERFANCPFSHFVTYGLRPKERKEYQLSNPDIGRLFHDSMEQFTKEMVNEEIQWKDLTKEKNDELVEKVIDEMVPDFEHGIMLSTHRYQYLVTRLKRISKRAMWTLTDHVKKGEFVPMGHEIIFGLEGDVPPIIIELANGEKIYLEGRIDRVDLLNDEEDGNYVKIIDYKSGSKEFSLSDVYYGLQIQLMVYLDAILSSEEKKHQVEIHPGGIFYFKIDDPMVKTTEKVVEEVEKEINKKLKMKGLVLKDVNIIKKMDRSIGRSSTIVPAGLTKDDEISKSSSALPEEDFKALLNHVRRLVKEIGEEMLKGNVKIEPFKKGGDTSCKYCDYIAICQFDNSFHDNQYKNIKELKSDEVLERIKKESQKKLE.

One can recognise a UvrD-like helicase ATP-binding domain in the interval Met-1–Val-276. ATP is bound at residue Gly-8–Ser-15. Positions Glu-273–Ser-586 constitute a UvrD-like helicase C-terminal domain. [4Fe-4S] cluster is bound by residues Cys-786, Cys-1105, Cys-1108, and Cys-1114.

Belongs to the helicase family. AddB/RexB type 1 subfamily. Heterodimer of AddA and AddB. Mg(2+) serves as cofactor. [4Fe-4S] cluster is required as a cofactor.

Its function is as follows. The heterodimer acts as both an ATP-dependent DNA helicase and an ATP-dependent, dual-direction single-stranded exonuclease. Recognizes the chi site generating a DNA molecule suitable for the initiation of homologous recombination. The AddB subunit has 5' -&gt; 3' nuclease activity but not helicase activity. The protein is ATP-dependent helicase/deoxyribonuclease subunit B of Alkaliphilus metalliredigens (strain QYMF).